A 672-amino-acid polypeptide reads, in one-letter code: MKQEQSHEGDSYSTEFINLFGKDTATHPSSNNGANNNGMGSTNSLDQFVATASSSSSLVTSSENRRPLIGDVTNRGNTNLYDHAVTPEILLEQLAYVDNFIPSLDNEFSNVDWNVNTTHNNANNNGADTFSSINANPFDLDEQLAIELSAFADDSFIFPDEDKPSNNNNNSNNGNDDHSNHDVLHEDPSTNNRQRNPHFLTQRRNTFLTSQYDQSKSRFSSKNKRNGNNGETNNFGDNMQNNHPFEPNFMGSPSQFPADATNMTSIDHGGFTNVDITSTENNTTGDNGVDALSNLLHRTTHTPNRSSPLSNVTSAQNSSSQQRKHSESKVDSNSDNNSSNKAPNITVPDYSIIPTSVLVTLLPRVNVPNGAYNSLISAGFDNDQIDAIAAIMAYHHQKKIRENNSNNNKNINTNDSQEAPILKNINELLSVLIPPSPAETRGPTTLSTSPSFNEHGVVAEASFLSSILELGIKHPKSNNIHNQRQPSRNDHKISRESDGNNGNDNVHHNNAVIKSSTTRGDEIAKIRSEPTLNASSSDHKENSLKRSHSGDLKNKKVPVDRKYSDNEDDEYDDADLHGFEKKQLIKKELGDDDEDLLIQSKKSHQKKKLKEKELESSIHELTEIAASLQKRIHTLETENKLLKNLVLSSGETEGIKKAESLKKQIFEKVQKE.

Over residues 1 to 10 (MKQEQSHEGD) the composition is skewed to basic and acidic residues. Residues 1–44 (MKQEQSHEGDSYSTEFINLFGKDTATHPSSNNGANNNGMGSTNS) are disordered. Low complexity predominate over residues 29–44 (SSNNGANNNGMGSTNS). Short sequence motifs (9aaTAD) lie at residues 89 to 97 (ILLEQLAYV), 102 to 110 (PSLDNEFSN), and 109 to 117 (SNVDWNVNT). The transcriptional activation stretch occupies residues 95–144 (AYVDNFIPSLDNEFSNVDWNVNTTHNNANNNGADTFSSINANPFDLDEQL). 2 disordered regions span residues 157-265 (IFPD…NMTS) and 299-347 (TTHT…NITV). The span at 165-174 (SNNNNNSNNG) shows a compositional bias: low complexity. Positions 175 to 188 (NDDHSNHDVLHEDP) are enriched in basic and acidic residues. Residues 188–235 (PSTNNRQRNPHFLTQRRNTFLTSQYDQSKSRFSSKNKRNGNNGETNNF) form an inhibitory region; AdoMet responsiveness; required for interaction with MET30 region. Residues 202–214 (QRRNTFLTSQYDQ) show a composition bias toward polar residues. Residues 226-238 (NGNNGETNNFGDN) show a composition bias toward low complexity. Composition is skewed to polar residues over residues 251-265 (GSPSQFPADATNMTS) and 301-321 (HTPNRSSPLSNVTSAQNSSSQ). Positions 312-375 (VTSAQNSSSQ…NVPNGAYNSL (64 aa)) are auxiliary; required for high transcriptional activity under nonrepressive growth conditions. A required for interaction with MET31 and MET32 region spans residues 375-403 (LISAGFDNDQIDAIAAIMAYHHQKKIREN). Serine 416 is modified (phosphoserine). Residues 475–574 (PKSNNIHNQR…DNEDDEYDDA (100 aa)) form a disordered region. Over residues 477–486 (SNNIHNQRQP) the composition is skewed to polar residues. Residues 487-498 (SRNDHKISRESD) are compositionally biased toward basic and acidic residues. Low complexity predominate over residues 499–512 (GNNGNDNVHHNNAV). Basic and acidic residues-rich tracts occupy residues 519-528 (RGDEIAKIRS) and 537-565 (SDHKENSLKRSHSGDLKNKKVPVDRKYSD). Phosphoserine is present on serine 564. The region spanning 586 to 649 (KKELGDDDED…KLLKNLVLSS (64 aa)) is the bZIP domain. The interval 601–612 (KKSHQKKKLKEK) is basic motif. A coiled-coil region spans residues 609–648 (LKEKELESSIHELTEIAASLQKRIHTLETENKLLKNLVLS). The leucine-zipper stretch occupies residues 614–642 (LESSIHELTEIAASLQKRIHTLETENKLL).

Belongs to the bZIP family. Interacts with MET30. Tethered to DNA through two alternate complexes associating MET4 with MET28 and either MET31 or MET32. Interacts with MET28 and CBF1 through its leucine zipper to form a heteromeric complex.

Its subcellular location is the nucleus. Functionally, positive trans-acting factor capable of stimulating the transcription of the MET genes from the methionine biosynthetic pathway. MET4, MET28 and CBF1 are required for full induction of MET25 and MET16 gene transcription. MET4 controls as well the derepression of MET6. Required for the transcription of genes necessary for sulfur amino acid biosynthesis. Involved in the transcription activation of MET28 and MET30. Required for MET3 gene expression via assembly of the MET4-MET28-MET31 and MET4-MET28-MET32 complexes. Involved in response to cadmium and arsenic. Cadmium-activated MET4 also induces glutathione biosynthesis. The protein is Transcriptional activator of sulfur metabolism MET4 (MET4) of Saccharomyces cerevisiae (strain ATCC 204508 / S288c) (Baker's yeast).